Reading from the N-terminus, the 311-residue chain is Urease accessory protein UreD 3 (311 aa).

The protein belongs to the UreD family. UreD, UreF and UreG form a complex that acts as a GTP-hydrolysis-dependent molecular chaperone, activating the urease apoprotein by helping to assemble the nickel containing metallocenter of UreC. The UreE protein probably delivers the nickel.

It localises to the cytoplasm. Its function is as follows. Required for maturation of urease via the functional incorporation of the urease nickel metallocenter. The polypeptide is Urease accessory protein UreD 3 (Methylorubrum populi (strain ATCC BAA-705 / NCIMB 13946 / BJ001) (Methylobacterium populi)).